The chain runs to 967 residues: Transmembrane channel-like protein 5 (967 aa).

Composition is skewed to polar residues over residues 1–10 (MSSFHQNSSY), 21–31 (GSRNHTHNYLE), 53–62 (NPHSSGSRTN), and 168–184 (QDNS…SNLP). The disordered stretch occupies residues 1 to 240 (MSSFHQNSSY…EEGDGYSSSK (240 aa)). Residues 1–420 (MSSFHQNSSY…YFSFLRWLLK (420 aa)) lie on the Extracellular side of the membrane. The chain crosses the membrane as a helical span at residues 421 to 441 (FNIFSFVMNFSFIIIPQFTVG). The Cytoplasmic portion of the chain corresponds to 442–449 (AKNTLQFT). Residues 450–470 (GLEFFTGAGYFGDTVMYYGFY) form a helical membrane-spanning segment. Over 471–487 (TNSTIRHRMGGASYNMQ) the chain is Extracellular. Residues 488-508 (LAYIFTIGACLVVCFFSLLFS) traverse the membrane as a helical segment. The Cytoplasmic portion of the chain corresponds to 509-581 (MAKYFRNNFI…NQQLTRFSAH (73 aa)). Residues 582–602 (VAAWLVSTGVTAACCVAVYYL) traverse the membrane as a helical segment. Residues 603 to 616 (AEYNSEFLKTHRNP) are Extracellular-facing. A helical transmembrane segment spans residues 617–637 (GAVLLLPFVVSCINLAVPRFY). Over 638-660 (SMFRLVERYEIPRQEVYVLLVRN) the chain is Cytoplasmic. The helical transmembrane segment at 661 to 681 (IFLKISIVGILCYYWLNIVAL) threads the bilayer. Topologically, residues 682–694 (SGEECWETLIGQD) are extracellular. A helical transmembrane segment spans residues 695–715 (IYRLLLMDFVFSLADSLLGEF). Topologically, residues 716–749 (LRRLIGMKFTSLSLQEFDIARNVLELIYAQTLTW) are cytoplasmic. Residues 750–770 (LGIFFCPLLPFIQMITLFIMF) traverse the membrane as a helical segment. Residues 771–796 (YVKNVSLMMNFQPPSKAWRASQMITF) are Extracellular-facing. Residues 797–817 (FIFLLFFPSFTGVLCTLAITI) traverse the membrane as a helical segment. Residues 818–861 (WRLKPSADCGPFRGLPSFIQSIYSWIDTLSRRPGYLWVVWIYQN) are Cytoplasmic-facing. The chain crosses the membrane as a helical span at residues 862 to 882 (LIGSVHFFFILTLIVLIITYL). The Extracellular segment spans residues 883-967 (YWQITEGRKV…RSAQEENPIA (85 aa)).

It belongs to the TMC family. As to expression, ubiquitously expressed.

It localises to the membrane. Its function is as follows. Probable component of an ion channel. Molecular function hasn't been characterized yet. The chain is Transmembrane channel-like protein 5 from Mus musculus (Mouse).